The chain runs to 115 residues: uncharacterized protein (115 aa).

3 helical membrane-spanning segments follow: residues 10–30 (IAIL…SFWL), 47–67 (ASGI…ATVA), and 77–97 (VHFF…AIIV).

The protein resides in the cell membrane. This is an uncharacterized protein from Mycoplasma genitalium (strain ATCC 33530 / DSM 19775 / NCTC 10195 / G37) (Mycoplasmoides genitalium).